A 59-amino-acid chain; its full sequence is Chromatin protein Cren7 (59 aa).

It belongs to the Cren7 family. As to quaternary structure, monomer. Methylated at multiple sites, to varying extents.

The protein resides in the chromosome. Its subcellular location is the cytoplasm. A chromatin protein, binds double-stranded DNA without sequence specificity. Constrains negative DNA supercoils. In Sulfolobus acidocaldarius (strain ATCC 33909 / DSM 639 / JCM 8929 / NBRC 15157 / NCIMB 11770), this protein is Chromatin protein Cren7.